We begin with the raw amino-acid sequence, 93 residues long: YcgL domain-containing protein VIBHAR_01387 (93 aa).

A YcgL domain is found at 1 to 84 (MLCSIYKSSR…PPENLLEKYK (84 aa)).

This is YcgL domain-containing protein VIBHAR_01387 from Vibrio campbellii (strain ATCC BAA-1116).